We begin with the raw amino-acid sequence, 410 residues long: Trans-splicing factor Raa2, chloroplastic (410 aa).

2 disordered regions span residues methionine 1–alanine 40 and alanine 56–valine 106. The transit peptide at methionine 1–alanine 46 directs the protein to the chloroplast. The segment covering serine 14 to serine 25 has biased composition (low complexity). A compositionally biased stretch (polar residues) spans arginine 26 to arginine 35. Over residues arginine 96 to valine 106 the composition is skewed to low complexity.

It belongs to the pseudouridine synthase TruB family. In terms of assembly, possibly associated with other factors required for trans-splicing.

The protein resides in the plastid. The protein localises to the chloroplast. Functionally, required for trans-splicing of exons 2 and 3 of the chloroplast encoded psaA mRNA (a group II intron). It is not known if this protein has pseudouridine activity; mutation of the potential active site residue does not cause loss of trans-splicing. This Chlamydomonas reinhardtii (Chlamydomonas smithii) protein is Trans-splicing factor Raa2, chloroplastic (RAA2).